The primary structure comprises 202 residues: Heart- and neural crest derivatives-expressed protein 1 (202 aa).

Residues 83-135 (RKGVGGPKKERRRTESINSAFAELRECIPNVPADTKLSKIKTLRLATSYIAYL) form the bHLH domain. The interval 143-187 (SQPGEPEGFKAELKKADGRENKRKRETQPEVYSQPLAHGEKKLKG) is disordered. Residues 149-162 (EGFKAELKKADGRE) show a composition bias toward basic and acidic residues.

In terms of assembly, efficient DNA binding requires dimerization with another bHLH protein.

It is found in the nucleus. Its subcellular location is the nucleoplasm. The protein localises to the nucleolus. In terms of biological role, transcription factor. Plays an essential role in cardiac morphogenesis. The protein is Heart- and neural crest derivatives-expressed protein 1 (HAND1) of Gallus gallus (Chicken).